We begin with the raw amino-acid sequence, 295 residues long: Universal stress protein Mb2028c (295 aa).

ATP contacts are provided by residues glycine 13, 117–123, 131–132, glycine 165, aspartate 198, 262–268, and 276–278; these read GSSGRGA, SV, GSHGRGG, and SVS.

It belongs to the universal stress protein A family.

The chain is Universal stress protein Mb2028c from Mycobacterium bovis (strain ATCC BAA-935 / AF2122/97).